We begin with the raw amino-acid sequence, 404 residues long: Argininosuccinate synthase (404 aa).

Residues 10–18 (AYSGGVDTS) and A38 each bind ATP. Y89 lines the L-citrulline pocket. G119 is an ATP binding site. T121, N125, and D126 together coordinate L-aspartate. L-citrulline is bound at residue N125. L-citrulline-binding residues include R129, S177, S186, E262, and Y274.

Belongs to the argininosuccinate synthase family. Type 1 subfamily. Homotetramer.

The protein resides in the cytoplasm. It carries out the reaction L-citrulline + L-aspartate + ATP = 2-(N(omega)-L-arginino)succinate + AMP + diphosphate + H(+). It participates in amino-acid biosynthesis; L-arginine biosynthesis; L-arginine from L-ornithine and carbamoyl phosphate: step 2/3. The protein is Argininosuccinate synthase of Prochlorococcus marinus subsp. pastoris (strain CCMP1986 / NIES-2087 / MED4).